The sequence spans 716 residues: DNA ligase (716 aa).

Residues 49–53, 98–99, and Glu131 each bind NAD(+); these read DAEYD and SL. Residue Lys133 is the N6-AMP-lysine intermediate of the active site. 4 residues coordinate NAD(+): Arg154, Glu191, Lys308, and Lys332. 4 residues coordinate Zn(2+): Cys437, Cys439, Cys461, and Cys467. The BRCT domain occupies 638–716; the sequence is KRHSPIATKT…EDEWLQLIAE (79 aa).

This sequence belongs to the NAD-dependent DNA ligase family. LigA subfamily. The cofactor is Mg(2+). Requires Mn(2+) as cofactor.

It catalyses the reaction NAD(+) + (deoxyribonucleotide)n-3'-hydroxyl + 5'-phospho-(deoxyribonucleotide)m = (deoxyribonucleotide)n+m + AMP + beta-nicotinamide D-nucleotide.. DNA ligase that catalyzes the formation of phosphodiester linkages between 5'-phosphoryl and 3'-hydroxyl groups in double-stranded DNA using NAD as a coenzyme and as the energy source for the reaction. It is essential for DNA replication and repair of damaged DNA. The polypeptide is DNA ligase (Bradyrhizobium sp. (strain BTAi1 / ATCC BAA-1182)).